Consider the following 91-residue polypeptide: Probable Fe(2+)-trafficking protein (91 aa).

The protein belongs to the Fe(2+)-trafficking protein family.

Functionally, could be a mediator in iron transactions between iron acquisition and iron-requiring processes, such as synthesis and/or repair of Fe-S clusters in biosynthetic enzymes. The polypeptide is Probable Fe(2+)-trafficking protein (Ralstonia nicotianae (strain ATCC BAA-1114 / GMI1000) (Ralstonia solanacearum)).